Here is a 123-residue protein sequence, read N- to C-terminus: Small ribosomal subunit protein uS13c (123 aa).

Residues 90–123 (GKRHRNNLPVRGQRTRTNARSRRGSKKTVTGKKK) are disordered. Positions 102–123 (QRTRTNARSRRGSKKTVTGKKK) are enriched in basic residues.

The protein belongs to the universal ribosomal protein uS13 family. Part of the 30S ribosomal subunit.

The protein resides in the plastid. It localises to the chloroplast. Located at the top of the head of the 30S subunit, it contacts several helices of the 16S rRNA. The protein is Small ribosomal subunit protein uS13c of Trieres chinensis (Marine centric diatom).